We begin with the raw amino-acid sequence, 183 residues long: UPF0200 protein MMP1282 (183 aa).

Glycine 8–serine 15 is an ATP binding site.

The protein belongs to the UPF0200 family.

The polypeptide is UPF0200 protein MMP1282 (Methanococcus maripaludis (strain DSM 14266 / JCM 13030 / NBRC 101832 / S2 / LL)).